The chain runs to 224 residues: UPF0758 protein lmo1549 (224 aa).

Positions 102 to 224 constitute an MPN domain; that stretch reads VVRCPEDAVK…YISLKEKGYF (123 aa). The Zn(2+) site is built by histidine 173, histidine 175, and aspartate 186. Residues 173–186 carry the JAMM motif motif; it reads HNHPSGDPTPSSED.

The protein belongs to the UPF0758 family.

This chain is UPF0758 protein lmo1549, found in Listeria monocytogenes serovar 1/2a (strain ATCC BAA-679 / EGD-e).